The chain runs to 458 residues: tRNA modification GTPase MnmE (458 aa).

Residues R26, E88, and R127 each coordinate (6S)-5-formyl-5,6,7,8-tetrahydrofolate. The 155-residue stretch at G224 to F378 folds into the TrmE-type G domain. Residue N234 coordinates K(+). GTP is bound by residues N234–S239, T253–T259, and D278–G281. S238 is a Mg(2+) binding site. Residues T253, I255, and T258 each contribute to the K(+) site. A Mg(2+)-binding site is contributed by T259. K458 contributes to the (6S)-5-formyl-5,6,7,8-tetrahydrofolate binding site.

It belongs to the TRAFAC class TrmE-Era-EngA-EngB-Septin-like GTPase superfamily. TrmE GTPase family. As to quaternary structure, homodimer. Heterotetramer of two MnmE and two MnmG subunits. K(+) is required as a cofactor.

Its subcellular location is the cytoplasm. In terms of biological role, exhibits a very high intrinsic GTPase hydrolysis rate. Involved in the addition of a carboxymethylaminomethyl (cmnm) group at the wobble position (U34) of certain tRNAs, forming tRNA-cmnm(5)s(2)U34. This chain is tRNA modification GTPase MnmE, found in Streptococcus pyogenes serotype M1.